A 445-amino-acid chain; its full sequence is Trigger factor (445 aa).

The PPIase FKBP-type domain occupies 162-247 (GDQITMDAVG…VKAVHTAEPT (86 aa)).

Belongs to the FKBP-type PPIase family. Tig subfamily.

The protein localises to the cytoplasm. The enzyme catalyses [protein]-peptidylproline (omega=180) = [protein]-peptidylproline (omega=0). In terms of biological role, involved in protein export. Acts as a chaperone by maintaining the newly synthesized protein in an open conformation. Functions as a peptidyl-prolyl cis-trans isomerase. This is Trigger factor from Rickettsia bellii (strain OSU 85-389).